Consider the following 547-residue polypeptide: Chaperonin GroEL (547 aa).

ATP-binding positions include 30–33, lysine 51, 87–91, glycine 415, and aspartate 496; these read TLGP and DGTTT. The interval 527–547 is disordered; it reads ENTPDMPAMPPGGMGGMGGMY. Residues 538-547 are compositionally biased toward gly residues; sequence GGMGGMGGMY.

The protein belongs to the chaperonin (HSP60) family. As to quaternary structure, forms a cylinder of 14 subunits composed of two heptameric rings stacked back-to-back. Interacts with the co-chaperonin GroES.

It is found in the cytoplasm. It carries out the reaction ATP + H2O + a folded polypeptide = ADP + phosphate + an unfolded polypeptide.. Its function is as follows. Together with its co-chaperonin GroES, plays an essential role in assisting protein folding. The GroEL-GroES system forms a nano-cage that allows encapsulation of the non-native substrate proteins and provides a physical environment optimized to promote and accelerate protein folding. The protein is Chaperonin GroEL of Chlorobium phaeovibrioides (strain DSM 265 / 1930) (Prosthecochloris vibrioformis (strain DSM 265)).